The sequence spans 416 residues: MKIYLVGGAVRDQLLGLPVKDRDWIVVGADPATLLSLGYQQVGKDFPVFLNPKTKEEYALARTERKSSTGYTGFICDFSPTITLEQDLIRRDLTINAMAQSEDGEIIDPYGGKQDLENRILRHISPAFSEDPLRVLRVARFAARYHSLGFKIASETLALMAELAQSGELQHLTAERVWLETEKALNEKNPEIYFETLHKTGALSVLFSEIDALHGVPNPVKHHPEVDSFIHTMLVLKQAVNLTENNPILNKSAVRFAAICHDLGKALTPQNILPHHYGHEQAGIKPTRSLCKRLKVPSYFQELAELTCEFHTHIHKAFELRAETVITLFNRFDVWRKSQRFQEFLQVCLADTRGRTGFENKDYPQIDYINQLLHAANEVDVQQVIADGFEKQAIKNELTKRRILAVKQTKTNYPTN.

G8 and R11 together coordinate ATP. CTP-binding residues include G8 and R11. Positions 21 and 23 each coordinate Mg(2+). Residues R91, R137, and R140 each coordinate ATP. CTP-binding residues include R91, R137, and R140. An HD domain is found at 228-335 (SFIHTMLVLK…ITLFNRFDVW (108 aa)).

It belongs to the tRNA nucleotidyltransferase/poly(A) polymerase family. Bacterial CCA-adding enzyme type 1 subfamily. Monomer. Can also form homodimers and oligomers. Mg(2+) serves as cofactor. Requires Ni(2+) as cofactor.

The enzyme catalyses a tRNA precursor + 2 CTP + ATP = a tRNA with a 3' CCA end + 3 diphosphate. The catalysed reaction is a tRNA with a 3' CCA end + 2 CTP + ATP = a tRNA with a 3' CCACCA end + 3 diphosphate. Catalyzes the addition and repair of the essential 3'-terminal CCA sequence in tRNAs without using a nucleic acid template. Adds these three nucleotides in the order of C, C, and A to the tRNA nucleotide-73, using CTP and ATP as substrates and producing inorganic pyrophosphate. tRNA 3'-terminal CCA addition is required both for tRNA processing and repair. Also involved in tRNA surveillance by mediating tandem CCA addition to generate a CCACCA at the 3' terminus of unstable tRNAs. While stable tRNAs receive only 3'-terminal CCA, unstable tRNAs are marked with CCACCA and rapidly degraded. This chain is Multifunctional CCA protein, found in Haemophilus influenzae (strain PittGG).